Consider the following 336-residue polypeptide: Retinol dehydrogenase 14 (336 aa).

Thr-5 is modified (phosphothreonine). 50-56 (GANSGLG) contacts NADP(+). Residue Ser-192 coordinates substrate. The active-site Proton acceptor is the Tyr-217.

The protein belongs to the short-chain dehydrogenases/reductases (SDR) family. As to expression, widely expressed.

It catalyses the reaction all-trans-retinol + NADP(+) = all-trans-retinal + NADPH + H(+). The enzyme catalyses 9-cis-retinol + NADP(+) = 9-cis-retinal + NADPH + H(+). The catalysed reaction is 11-cis-retinol + NADP(+) = 11-cis-retinal + NADPH + H(+). It functions in the pathway cofactor metabolism; retinol metabolism. Its function is as follows. Retinol dehydrogenase with a clear preference for NADP. Displays high activity towards 9-cis, 11-cis and all-trans-retinol. Shows a very weak activity towards 13-cis-retinol. Has no activity towards steroid. The polypeptide is Retinol dehydrogenase 14 (RDH14) (Homo sapiens (Human)).